A 294-amino-acid chain; its full sequence is Basic endochitinase (294 aa).

Residues 1–24 form the signal peptide; sequence MNIKVSLLFILPIFLLLLTSKVKA. The GH18 domain occupies 25–294; it reads GDIVVYWGQD…GYSSAIRGAV (270 aa). 2 cysteine pairs are disulfide-bonded: Cys44/Cys91 and Cys74/Cys81. Glu151 functions as the Proton donor in the catalytic mechanism. Residues Cys182 and Cys211 are joined by a disulfide bond.

Belongs to the glycosyl hydrolase 18 family. Chitinase class II subfamily.

The enzyme catalyses Random endo-hydrolysis of N-acetyl-beta-D-glucosaminide (1-&gt;4)-beta-linkages in chitin and chitodextrins.. Functionally, this protein functions as a defense against chitin containing fungal pathogens. The sequence is that of Basic endochitinase from Nicotiana tabacum (Common tobacco).